An 83-amino-acid chain; its full sequence is Mitochondrial import inner membrane translocase subunit Tim8 B (83 aa).

Position 2 is an N-acetylalanine (A2). Residues 36–59 carry the Twin CX3C motif motif; sequence CWDKCVEKPGNRLDSRTENCLSSC. 2 cysteine pairs are disulfide-bonded: C36/C59 and C40/C55.

The protein belongs to the small Tim family. As to quaternary structure, heterohexamer; possibly composed of 3 copies of TIMM8B and 3 copies of TIMM13, named soluble 70 kDa complex. Associates with the TIM22 complex, whose core is composed of TIMM22. In terms of tissue distribution, ubiquitous, with highest expression in heart, kidney, liver and skeletal muscle.

It is found in the mitochondrion inner membrane. Functionally, probable mitochondrial intermembrane chaperone that participates in the import and insertion of some multi-pass transmembrane proteins into the mitochondrial inner membrane. Also required for the transfer of beta-barrel precursors from the TOM complex to the sorting and assembly machinery (SAM complex) of the outer membrane. Acts as a chaperone-like protein that protects the hydrophobic precursors from aggregation and guide them through the mitochondrial intermembrane space. This chain is Mitochondrial import inner membrane translocase subunit Tim8 B (TIMM8B), found in Homo sapiens (Human).